Reading from the N-terminus, the 372-residue chain is Probable NADH-dependent flavin oxidoreductase YqiG (372 aa).

This sequence belongs to the NADH:flavin oxidoreductase/NADH oxidase family.

The sequence is that of Probable NADH-dependent flavin oxidoreductase YqiG (yqiG) from Bacillus subtilis (strain 168).